A 329-amino-acid chain; its full sequence is Ankyrin repeat and SOCS box protein 5 (329 aa).

ANK repeat units lie at residues 69–98 (ADRS…NVNA), 102–131 (DHIT…NVNA), 135–164 (DGVT…KAQL), 167–196 (CLPS…DVDQ), 200–229 (HLGT…DVQK), and 232–261 (YWDT…DINA). The SOCS box domain maps to 278 to 329 (MVERILLQHEATPSSLCQLCRLCIRNYIGRPRLHLIPQLQLPTLLQNFLQYR).

This sequence belongs to the ankyrin SOCS box (ASB) family. As to expression, expressed in endothelial and smooth muscle cells of collateral arteries as well as in satellite cells.

The protein operates within protein modification; protein ubiquitination. In terms of biological role, may be a substrate-recognition component of a SCF-like ECS (Elongin-Cullin-SOCS-box protein) E3 ubiquitin-protein ligase complex which mediates the ubiquitination and subsequent proteasomal degradation of target proteins. May play a role in the initiation of arteriogenesis. In Oryctolagus cuniculus (Rabbit), this protein is Ankyrin repeat and SOCS box protein 5 (ASB5).